Consider the following 207-residue polypeptide: Strobilurin A biosynthesis cluster protein r1 (207 aa).

Helical transmembrane passes span 108–128 (FIFPSLALKTTIWSVAGLLYL) and 169–189 (NLTTGVSYVLGTLVFGFPFWI).

The protein resides in the membrane. It functions in the pathway mycotoxin biosynthesis. Its function is as follows. Part of the gene cluster that mediates the biosynthesis of strobilurin A, an antifungal polyketide that contains a key beta-methoxyacrylate toxophore that targets the complex III of the mitochondrial electron transport chain. Strobilurin biosynthesis begins with construction of benzoyl CoA by step-wise elimination of ammonia from phenylalanine by the phenylalanine ammonia-lyase str11, oxygenation by str8 and retro-Claisen reaction to form benzoic acid, which is activated to its CoA thiolester benzoyl CoA by the dedicated CoA ligase str10. Benzoyl CoA forms the starter unit for the highly reducing polyketide synthase stpks1 that produces the polyketide prestrobilutin A. The FAD-dependent oxygenase str9 then catalyzes the key oxidative rearrangement responsible for the creation of the beta-methoxyacrylate toxophore. Str9 performs epoxidation of the 2,3 olefin of prestrobilutin A, followed by Meinwald rearrangement to furnish the aldehyde intermediate. Rapid enolization of the aldehyde intermediate would give the beta-methoxyacrylate skeleton and methylations catalyzed by str2 and str3 complete the synthesis and lead to the production of strobilurin A. The short-chain dehydrogenase stl2 and the dehydrogenase str4 play a role in the shunt pathway leading to the production of bolineol. The cluster encodes no obvious halogenase gene that could be involved in production of strobilurin B, nor any obvious dimethylallyl-transferase that could be involved in the production of strobilurin G. It is possible that unknown proteins encoded in, or near, the cluster (such as str1 or stl1) may form new classes of halogenases or dimethylally-transferases, or that the responsible genes are located elsewhere on the genome. Similarly, proteins encoded by str5/str6 hydrolases appear to have no chemical role in the biosynthesis of strobilurin A. Finally, no obvious self-resistance gene is found within the cluster. This chain is Strobilurin A biosynthesis cluster protein r1, found in Strobilurus tenacellus.